Reading from the N-terminus, the 54-residue chain is Ovomucoid (54 aa).

In terms of domain architecture, Kazal-like spans 4 to 54; that stretch reads VDCSDYPKPACTLEYMPLCGSDNKTYGNKCNFCNAVVDSNGTLTLSHFGKC. 3 cysteine pairs are disulfide-bonded: C6–C36, C14–C33, and C22–C54. N-linked (GlcNAc...) asparagine glycosylation is present at N43.

Its subcellular location is the secreted. This chain is Ovomucoid, found in Dendrocygna arcuata (Wandering whistling-duck).